Consider the following 360-residue polypeptide: SPRY domain-containing SOCS box protein 3 (360 aa).

Residues 21–54 (DQDGRSPALHAEEEAWGYDSDGQHSNSDSDTDLL) are disordered. A B30.2/SPRY domain is found at 84-274 (SLHPFRQIKS…MKVIRSCCCR (191 aa)). Residues 264-315 (SMKVIRSCCCRTSLQYLCCARLRQLLPGSVDSLEVLPLPPGLKQVLSNKLGW) form the SOCS box domain. Residues 322 to 350 (NRSSQHKGDGSATTSCGSYSDSSCTPGHD) form a disordered region. The span at 332–346 (SATTSCGSYSDSSCT) shows a compositional bias: polar residues.

It belongs to the SPSB family. In terms of assembly, substrate-recognition component of the ECS(SPSB3) complex, composed of spsb3, cul5, elob, elob and rnf7/rbx2.

The protein localises to the nucleus. It participates in protein modification; protein ubiquitination. In terms of biological role, substrate-recognition component of a cullin-5-RING E3 ubiquitin-protein ligase complex (ECS complex, also named CRL5 complex), which mediates the ubiquitination and subsequent proteasomal degradation of target proteins. In Xenopus laevis (African clawed frog), this protein is SPRY domain-containing SOCS box protein 3 (spsb3).